The primary structure comprises 542 residues: Tripartite motif-containing protein 26 (542 aa).

The RING-type zinc-finger motif lies at 16-57; the sequence is CSICLDYLRDPVTIDCGHVFCRSCTSDIRPISGNRPVCPLCK. The segment at 97–138 adopts a B box-type zinc-finger fold; sequence QDMKLCERHQEKLHYYCEDDGKLLCVMCRESREHRPHTAVLV. Zn(2+)-binding residues include cysteine 102, histidine 105, cysteine 124, and histidine 130. Positions 197-243 form a coiled coil; that stretch reads QFLKKREQHLLDQLATLEQLLTEGREKFKTRGVSELDRLTLVISELE. The B30.2/SPRY domain maps to 298 to 542; sequence RGLRQFQGKL…WPEARLLLRP (245 aa). A disordered region spans residues 379 to 440; it reads REGWSEDEEE…EEEEEVQESC (62 aa). 2 stretches are compositionally biased toward acidic residues: residues 383–405 and 413–437; these read SEDE…EEPG and WETD…EEVQ. Residues 411 to 440 adopt a coiled-coil conformation; that stretch reads EDWETDEEDESLGEEEEEEEEEEEEVQESC.

The protein belongs to the TRIM/RBCC family. In terms of assembly, interacts with TBK1; this interaction bridges together TBK1 and NEMO in order to activate TBK1. Interacts with INCA1. In terms of processing, autoubiquitinates upon viral infection. In turn, autoubiquitinated TRIM26 recruits NEMO and bridges TBK1-NEMO interaction.

The protein localises to the cytoplasm. It is found in the nucleus. It catalyses the reaction S-ubiquitinyl-[E2 ubiquitin-conjugating enzyme]-L-cysteine + [acceptor protein]-L-lysine = [E2 ubiquitin-conjugating enzyme]-L-cysteine + N(6)-ubiquitinyl-[acceptor protein]-L-lysine.. In terms of biological role, E3 ubiquitin-protein ligase which regulates the IFN-beta production and antiviral response downstream of various DNA-encoded pattern-recognition receptors (PRRs). Also plays a central role in determining the response to different forms of oxidative stress by controlling levels of DNA glycosylases NEIL1, NEIL3 and NTH1 that are involved in repair of damaged DNA. Promotes nuclear IRF3 ubiquitination and proteasomal degradation. Bridges together TBK1 and NEMO during the innate response to viral infection leading to the activation of TBK1. Positively regulates LPS-mediated inflammatory innate immune response by catalyzing the 'Lys-11'-linked polyubiquitination of TAB1 to enhance its activation and subsequent NF-kappa-B and MAPK signaling. In a manner independent of its catalytic activity, inhibits WWP2, a SOX2-directed E3 ubiquitin ligase, and thus protects SOX2 from polyubiquitination and proteasomal degradation. Ubiquitinates the histone acetyltransferase protein complex component PHF20 and thereby triggers its degradation in the nucleus after its recruitment by the histone demethylase KDM6B, serving as a scaffold protein. Upon induction by TGF-beta, ubiquitinates the TFIID component TAF7 for proteasomal degradation. Induces ferroptosis by ubiquitinating SLC7A11, a critical protein for lipid reactive oxygen species (ROS) scavenging. The polypeptide is Tripartite motif-containing protein 26 (Trim26) (Rattus norvegicus (Rat)).